The chain runs to 302 residues: Recombination-associated protein RdgC (302 aa).

It belongs to the RdgC family.

Its subcellular location is the cytoplasm. The protein localises to the nucleoid. In terms of biological role, may be involved in recombination. The chain is Recombination-associated protein RdgC from Mannheimia succiniciproducens (strain KCTC 0769BP / MBEL55E).